We begin with the raw amino-acid sequence, 146 residues long: Snaclec CTL-Eoc124 (146 aa).

The first 23 residues, 1 to 23 (MGRFISVSFGLLVVFLSLSGTGA), serve as a signal peptide directing secretion. Cystine bridges form between Cys-25–Cys-36, Cys-53–Cys-142, and Cys-119–Cys-134. Residues 32–143 (YQGHCYRVFN…CSRTNNVACK (112 aa)) form the C-type lectin domain.

This sequence belongs to the snaclec family. As to quaternary structure, heterodimer; disulfide-linked. As to expression, expressed by the venom gland.

The protein localises to the secreted. Interferes with one step of hemostasis (modulation of platelet aggregation, or coagulation cascade, for example). In Echis ocellatus (Ocellated saw-scaled viper), this protein is Snaclec CTL-Eoc124.